The primary structure comprises 427 residues: Putative transporter YdfJ (427 aa).

The Cytoplasmic portion of the chain corresponds to Met-1–Ser-7. Transmembrane regions (helical) follow at residues Leu-8–Leu-28 and Ile-29–Phe-49. Residues Gly-50–Thr-74 lie on the Cytoplasmic side of the membrane. Residues Leu-75–Thr-95 traverse the membrane as a helical segment. Residues Leu-96 to Arg-97 are Periplasmic-facing. Residues Ile-98–Tyr-118 form a helical membrane-spanning segment. Residues Ala-119–Ala-132 lie on the Cytoplasmic side of the membrane. The chain crosses the membrane as a helical span at residues Met-133 to Leu-153. The Periplasmic portion of the chain corresponds to Ser-154–Glu-157. Residues Leu-158–Ile-178 traverse the membrane as a helical segment. The Cytoplasmic portion of the chain corresponds to Trp-179–Gln-225. Residues Ala-226–Phe-246 traverse the membrane as a helical segment. Over Asn-247–Pro-251 the chain is Periplasmic. The chain crosses the membrane as a helical span at residues Thr-252–Leu-272. Residues Ser-273–Arg-279 lie on the Cytoplasmic side of the membrane. Residues Ile-280–Ile-300 traverse the membrane as a helical segment. Over Val-301–Pro-307 the chain is Periplasmic. Residues Ser-308–Leu-328 traverse the membrane as a helical segment. Residues Glu-329–Glu-351 are Cytoplasmic-facing. A helical transmembrane segment spans residues Ile-352–Thr-372. Glu-373 is a topological domain (periplasmic). Residues Ser-374–Leu-394 form a helical membrane-spanning segment. Topologically, residues Lys-395 to Leu-427 are cytoplasmic.

Belongs to the major facilitator superfamily. Metabolite:H+ Symporter (MHS) family (TC 2.A.1.6) family.

It localises to the cell inner membrane. In terms of biological role, when overexpressed in human HEK-293 cells forms an inward rectifying potassium channel. The chain is Putative transporter YdfJ (ydfJ) from Escherichia coli (strain K12).